We begin with the raw amino-acid sequence, 398 residues long: MAKEKYDRSKPHVNIGTIGHVDHGKTTLTAAITTVLARRLPTSVNQPKDYASIDAAPEERERGITINTAHVEYETEKRHYAHIDAPGHADYVKNMITGAAQMDGAILVVASTDGPMPQTREHILLSRQVGVKHLIVFMNKVDLVDDEELLELVEMEIRDLLSEYDFPGDDLPVIQGSALKALEGDEKYEDIIMELMSTVDEYIPEPERDTDKPLLLPVEDVFSITGRGTVASGRIDRGTVRVNDEVEIVGIKEDIQKAVVTGVEMFRKQLDEGLAGDNVGVLLRGVQRDEIERGQVLAKPGSINPHTRFKGEVYILSKEEGGRHTPFFNNYRPQFYFRTTDVTGSIELPAGTEMVMPGDNVTIEVELIHPIAVEQGTTFSIREGGRTVGSGIVSEIEA.

The tr-type G domain occupies 10-207 (KPHVNIGTIG…TVDEYIPEPE (198 aa)). The tract at residues 19 to 26 (GHVDHGKT) is G1. A GTP-binding site is contributed by 19-26 (GHVDHGKT). Residue Thr-26 coordinates Mg(2+). The G2 stretch occupies residues 63–67 (GITIN). The segment at 84–87 (DAPG) is G3. Residues 84 to 88 (DAPGH) and 139 to 142 (NKVD) contribute to the GTP site. Positions 139–142 (NKVD) are G4. Residues 177 to 179 (SAL) are G5.

Belongs to the TRAFAC class translation factor GTPase superfamily. Classic translation factor GTPase family. EF-Tu/EF-1A subfamily. As to quaternary structure, monomer.

It localises to the cytoplasm. The enzyme catalyses GTP + H2O = GDP + phosphate + H(+). GTP hydrolase that promotes the GTP-dependent binding of aminoacyl-tRNA to the A-site of ribosomes during protein biosynthesis. The protein is Elongation factor Tu of Streptococcus agalactiae serotype V (strain ATCC BAA-611 / 2603 V/R).